Reading from the N-terminus, the 230-residue chain is UPF0173 metal-dependent hydrolase LI0883 (230 aa).

Belongs to the UPF0173 family.

This Lawsonia intracellularis (strain PHE/MN1-00) protein is UPF0173 metal-dependent hydrolase LI0883.